The sequence spans 273 residues: Undecaprenyl-diphosphatase (273 aa).

8 consecutive transmembrane segments (helical) span residues 4-24, 48-68, 89-109, 116-136, 152-172, 193-213, 222-242, and 252-272; these read MELWKAIILGMVEGLTEFAPV, AANTFKVVIQLGSILAAVVVF, LNLIHVIIGLLPAGVLGVLFE, LFSTKTVLIGLVLGALLMIAA, ITYKQAFFVGLMQCLSLWPGF, ADFTFIMAVPIMAGASGLSLL, ADIPFFIAGFFSAFVFALLAI, and IRLVPFAVYRIVLAVVIYFLY.

Belongs to the UppP family.

It localises to the cell membrane. It carries out the reaction di-trans,octa-cis-undecaprenyl diphosphate + H2O = di-trans,octa-cis-undecaprenyl phosphate + phosphate + H(+). Catalyzes the dephosphorylation of undecaprenyl diphosphate (UPP). Confers resistance to bacitracin. This Geobacillus kaustophilus (strain HTA426) protein is Undecaprenyl-diphosphatase.